The primary structure comprises 572 residues: Dihydroxy-acid dehydratase (572 aa).

Cys57 contacts [2Fe-2S] cluster. Asp89 contacts Mg(2+). Position 130 (Cys130) interacts with [2Fe-2S] cluster. Residues Asp131 and Lys132 each contribute to the Mg(2+) site. Lys132 is subject to N6-carboxylysine. Cys202 contributes to the [2Fe-2S] cluster binding site. Glu453 lines the Mg(2+) pocket. The active-site Proton acceptor is the Ser479.

This sequence belongs to the IlvD/Edd family. As to quaternary structure, homodimer. Requires [2Fe-2S] cluster as cofactor. The cofactor is Mg(2+).

The enzyme catalyses (2R)-2,3-dihydroxy-3-methylbutanoate = 3-methyl-2-oxobutanoate + H2O. It carries out the reaction (2R,3R)-2,3-dihydroxy-3-methylpentanoate = (S)-3-methyl-2-oxopentanoate + H2O. It participates in amino-acid biosynthesis; L-isoleucine biosynthesis; L-isoleucine from 2-oxobutanoate: step 3/4. The protein operates within amino-acid biosynthesis; L-valine biosynthesis; L-valine from pyruvate: step 3/4. Functions in the biosynthesis of branched-chain amino acids. Catalyzes the dehydration of (2R,3R)-2,3-dihydroxy-3-methylpentanoate (2,3-dihydroxy-3-methylvalerate) into 2-oxo-3-methylpentanoate (2-oxo-3-methylvalerate) and of (2R)-2,3-dihydroxy-3-methylbutanoate (2,3-dihydroxyisovalerate) into 2-oxo-3-methylbutanoate (2-oxoisovalerate), the penultimate precursor to L-isoleucine and L-valine, respectively. The protein is Dihydroxy-acid dehydratase of Streptococcus thermophilus (strain CNRZ 1066).